The chain runs to 133 residues: Type III secretion protein HrcQb (133 aa).

A compositionally biased stretch (acidic residues) spans 1–21 (MSTEDLYQDDVEMLDDYEEPV). The segment at 1 to 60 (MSTEDLYQDDVEMLDDYEEPVPEQADQQQRDDEYAEHAFGYADSDAEHEEQSGDHHESPM) is disordered. Positions 49-59 (EEQSGDHHESP) are enriched in basic and acidic residues.

The protein belongs to the FliN/MopA/SpaO family. Homotetramer. The four monomers assemble into two tightly bound homodimers. Interacts with HrcQa.

The protein resides in the cytoplasm. Component of the type III secretion system, which is required for effector protein delivery, parasitism, and pathogenicity. Probably participates in the formation of a C-ring-like assembly along with HrcQa. The sequence is that of Type III secretion protein HrcQb (hrcQb) from Pseudomonas syringae pv. syringae.